Reading from the N-terminus, the 457-residue chain is MKVNLPVHKGEVLDVTIMDLTYQGMGVAKVDNYPIFIENALPEEKITVKVTKTTKNFAFGDVEKINQVSPHRVNPKGRVYRQTGIAPLQHLEYSEQLKFKQHQVAELFAKVHMDDVEVLPTIGMANPTQYRNKAQVPVRQVQGQLTTGFYKKNSHQLMPIEDYYIQDPAIDKAIVVVRDILRKYHEAAYDEFHHSGTIRTIMVRRGYYSHEMMVVIVTRTKHLPMADVVTQEIQAALPEVVSVIQNVNSKKTNVILGPVNNVLAGKATIDDQLLGLTFAISAQSFYQVNPQQTEKLYQLAIDQAGLTGNETVIDAYSGIGTISLTMAQHAKQVYGVEIVPAAIDNARQNADKNGITNATFVLDSAEKAMAKWQADGVKPDVIVVDPPRKGLDADFIKSAGEMAPKRVVYISCNPSTLVRDVQRFAEYGYHISAPVQPVDQFPQTPHIESVTVLEREQ.

Positions 6–64 (PVHKGEVLDVTIMDLTYQGMGVAKVDNYPIFIENALPEEKITVKVTKTTKNFAFGDVEK) constitute a TRAM domain. S-adenosyl-L-methionine-binding residues include Gln287, Tyr316, Glu337, and Asp385. Cys412 serves as the catalytic Nucleophile.

The protein belongs to the class I-like SAM-binding methyltransferase superfamily. RNA M5U methyltransferase family.

This is an uncharacterized protein from Lactiplantibacillus plantarum (strain ATCC BAA-793 / NCIMB 8826 / WCFS1) (Lactobacillus plantarum).